Consider the following 405-residue polypeptide: MAGVLGMILAGGEGSRLRPLTESRSKPSVPFGGSYRLIDFALNNFVNADLMRIYVLTQFKSQSLFHHLKKGWNINGITDRFIDPIPAQMRTGKRWYEGTADAIYQNLRFMELEEPDQVCIFGSDHIYKMDIKQMLNFHTEKKASLTVSALRMPLKEASQFGVIEVDAEGRMIGFEEKPANPKSIPGEPDFALVSMGNYVFEAQVLFSELVEDADNEASSHDFGKDIIPKMFPRGDVFVYDFSTNRISGEKEEVYWRDVGTIDAYWQAHMDLLEKDAPFSLYNRKWPLHTYYPPLPPATFTDSDNGRVQIIDSLVCNGSYVRGSRIEKSVLGFRSNIASACDISECILLGDVKIGEGCVLRRVIVDKDADIAPGTQIGVNLQEDKKHFHVSEEGIVVIPKGARVGY.

Alpha-D-glucose 1-phosphate-binding positions include Y96, G161, 176–177 (EK), and S194.

The protein belongs to the bacterial/plant glucose-1-phosphate adenylyltransferase family. As to quaternary structure, homotetramer.

It catalyses the reaction alpha-D-glucose 1-phosphate + ATP + H(+) = ADP-alpha-D-glucose + diphosphate. It functions in the pathway glycan biosynthesis; glycogen biosynthesis. Involved in the biosynthesis of ADP-glucose, a building block required for the elongation reactions to produce glycogen. Catalyzes the reaction between ATP and alpha-D-glucose 1-phosphate (G1P) to produce pyrophosphate and ADP-Glc. This chain is Glucose-1-phosphate adenylyltransferase 1, found in Vibrio parahaemolyticus serotype O3:K6 (strain RIMD 2210633).